The following is a 458-amino-acid chain: tRNA modification GTPase MnmE (458 aa).

Arg26, Glu88, and Arg127 together coordinate (6S)-5-formyl-5,6,7,8-tetrahydrofolate. The region spanning 224-378 (GLSTAIIGRP…IEERINDIFF (155 aa)) is the TrmE-type G domain. Residue Asn234 coordinates K(+). Residues 234 to 239 (NVGKSS), 253 to 259 (TDIEGTT), and 278 to 281 (DTAG) contribute to the GTP site. Ser238 is a Mg(2+) binding site. Thr253, Ile255, and Thr258 together coordinate K(+). Residue Thr259 participates in Mg(2+) binding. Lys458 lines the (6S)-5-formyl-5,6,7,8-tetrahydrofolate pocket.

The protein belongs to the TRAFAC class TrmE-Era-EngA-EngB-Septin-like GTPase superfamily. TrmE GTPase family. Homodimer. Heterotetramer of two MnmE and two MnmG subunits. Requires K(+) as cofactor.

The protein resides in the cytoplasm. Its function is as follows. Exhibits a very high intrinsic GTPase hydrolysis rate. Involved in the addition of a carboxymethylaminomethyl (cmnm) group at the wobble position (U34) of certain tRNAs, forming tRNA-cmnm(5)s(2)U34. The polypeptide is tRNA modification GTPase MnmE (Streptococcus agalactiae serotype III (strain NEM316)).